The chain runs to 247 residues: MGRKFCVGGNWKMNGDKASIADLCKVLTTGPLNADTEVVVGCPAPYLTLARSQLPDSVCVAAQNCYKVPKGAFTGEISPAMLKDLNIGWVILGHSERRAIFGESDELIADKVAHALAEGLKVIACIGETLQEREAGQTEAVCFRQTKAIADKVKDWSNVVIAYEPVWAIGTGKTASPEQAQEVHAALRKWFTENVSADVSAAIRIQYGGSVTAANCRELAAKPDIDGFLVGGASLKPEFIQIVNARQ.

N10 and K12 together coordinate substrate. H94 acts as the Electrophile in catalysis. E164 functions as the Proton acceptor in the catalytic mechanism.

Belongs to the triosephosphate isomerase family. As to quaternary structure, homodimer.

The catalysed reaction is D-glyceraldehyde 3-phosphate = dihydroxyacetone phosphate. Its pathway is carbohydrate biosynthesis; gluconeogenesis. It participates in carbohydrate degradation; glycolysis; D-glyceraldehyde 3-phosphate from glycerone phosphate: step 1/1. This is Triosephosphate isomerase (Tpi) from Culex tarsalis (Encephalitis mosquito).